The primary structure comprises 559 residues: 2-isopropylmalate synthase (559 aa).

A Pyruvate carboxyltransferase domain is found at P33–D307. Mg(2+)-binding residues include D42, H246, H248, and N282. Residues A439–A559 are regulatory domain.

It belongs to the alpha-IPM synthase/homocitrate synthase family. LeuA type 2 subfamily. In terms of assembly, homodimer. Mg(2+) serves as cofactor.

The protein localises to the cytoplasm. The catalysed reaction is 3-methyl-2-oxobutanoate + acetyl-CoA + H2O = (2S)-2-isopropylmalate + CoA + H(+). It functions in the pathway amino-acid biosynthesis; L-leucine biosynthesis; L-leucine from 3-methyl-2-oxobutanoate: step 1/4. Functionally, catalyzes the condensation of the acetyl group of acetyl-CoA with 3-methyl-2-oxobutanoate (2-ketoisovalerate) to form 3-carboxy-3-hydroxy-4-methylpentanoate (2-isopropylmalate). In Pseudomonas fluorescens (strain SBW25), this protein is 2-isopropylmalate synthase.